The primary structure comprises 283 residues: Dihydropteroate synthase (283 aa).

Residues 18 to 274 (PKIMGIVNLT…DVKATADALK (257 aa)) form the Pterin-binding domain. Asparagine 25 serves as a coordination point for Mg(2+). (7,8-dihydropterin-6-yl)methyl diphosphate is bound by residues threonine 66, aspartate 99, asparagine 119, aspartate 190, lysine 227, and 262–264 (RVH).

It belongs to the DHPS family. In terms of assembly, homodimer. Mg(2+) is required as a cofactor.

The catalysed reaction is (7,8-dihydropterin-6-yl)methyl diphosphate + 4-aminobenzoate = 7,8-dihydropteroate + diphosphate. Its pathway is cofactor biosynthesis; tetrahydrofolate biosynthesis; 7,8-dihydrofolate from 2-amino-4-hydroxy-6-hydroxymethyl-7,8-dihydropteridine diphosphate and 4-aminobenzoate: step 1/2. In terms of biological role, catalyzes the condensation of para-aminobenzoate (pABA) with 6-hydroxymethyl-7,8-dihydropterin diphosphate (DHPt-PP) to form 7,8-dihydropteroate (H2Pte), the immediate precursor of folate derivatives. The chain is Dihydropteroate synthase (folP) from Neisseria meningitidis serogroup C.